Reading from the N-terminus, the 325-residue chain is Phosphate import ATP-binding protein PstB (325 aa).

The ABC transporter domain occupies 79–320; that stretch reads IDNYNLWYSN…PNNEKTKDYI (242 aa). 111–118 lines the ATP pocket; it reads GPSGCGKS.

This sequence belongs to the ABC transporter superfamily. Phosphate importer (TC 3.A.1.7) family. As to quaternary structure, the complex is composed of two ATP-binding proteins (PstB), two transmembrane proteins (PstC and PstA) and a solute-binding protein (PstS).

The protein resides in the cell membrane. It catalyses the reaction phosphate(out) + ATP + H2O = ADP + 2 phosphate(in) + H(+). Part of the ABC transporter complex PstSACB involved in phosphate import. Responsible for energy coupling to the transport system. The chain is Phosphate import ATP-binding protein PstB from Mycoplasmoides gallisepticum (strain R(low / passage 15 / clone 2)) (Mycoplasma gallisepticum).